The chain runs to 196 residues: Ribosome-binding factor A (196 aa).

The protein belongs to the RbfA family. As to quaternary structure, monomer. Binds 30S ribosomal subunits, but not 50S ribosomal subunits or 70S ribosomes.

The protein localises to the cytoplasm. In terms of biological role, one of several proteins that assist in the late maturation steps of the functional core of the 30S ribosomal subunit. Associates with free 30S ribosomal subunits (but not with 30S subunits that are part of 70S ribosomes or polysomes). Required for efficient processing of 16S rRNA. May interact with the 5'-terminal helix region of 16S rRNA. This chain is Ribosome-binding factor A, found in Tropheryma whipplei (strain TW08/27) (Whipple's bacillus).